The primary structure comprises 556 residues: CBS domain-containing protein CBSCBSPB3 (556 aa).

2 stretches are compositionally biased toward polar residues: residues 1-20 and 30-44; these read MSTQ…NSTV and PVQS…NTSK. The segment at 1–63 is disordered; the sequence is MSTQATGPSS…SQAPSNGERT (63 aa). Ser2 carries the N-acetylserine modification. CBS domains follow at residues 68–127, 134–189, 235–294, and 302–360; these read RLSK…RPDQ, MTRN…RMEK, ITDN…LSPE, and MTPN…ENSS. Residues 414–502 form the PB1 domain; sequence GNSFSFKFED…KVLRLHLDFT (89 aa). A helical transmembrane segment spans residues 527–549; sequence WVSWRGGVVVTGAVVLTSIAIVV.

The protein localises to the membrane. The sequence is that of CBS domain-containing protein CBSCBSPB3 (CBSCBSPB3) from Arabidopsis thaliana (Mouse-ear cress).